A 916-amino-acid polypeptide reads, in one-letter code: Rab3 GTPase-activating protein catalytic subunit (916 aa).

The segment at 530-574 is disordered; the sequence is NSKRKSEGMVGKASSEEEEDEDDDEGEFFDCDDLTAGAGSPTKAV. Residues Ser543 and Ser544 each carry the phosphoserine modification. Residues 545–562 are compositionally biased toward acidic residues; that stretch reads EEEEDEDDDEGEFFDCDD.

It belongs to the Rab3-GAP catalytic subunit family. The Rab3 GTPase-activating complex is a heterodimer composed of Rab3GAP1 and Rab3-GAP.

The protein localises to the cytoplasm. Catalytic subunit of the Rab3 GTPase-activating (Rab3GAP) complex composed of Rab3-GAP and Rab3GAP1, which has both GTPase-activating protein (GAP) activity towards Rab3, and guanine nucleotide exchange factor (GEF) activity towards Rab18. As part of the Rab3GAP complex, required for the rapid induction and sustained expression of synaptic homeostasis at the neuromuscular junction (NMJ). Also participates in the regulation of autophagy in tissues such as larval fat cells and adult muscles. The Rab3GAP complex, acts as a GAP for Rab3 by converting active Rab3-GTP to the inactive form Rab3-GDP. At the neuromuscular junction (NMJ), forms a presynaptic signaling mechanism with Rab3 that regulates progression of synaptic homeostasis at a late stage of vesicle release. Within this mechanism Rab3-GTP acts, directly or indirectly, to inhibit the progression of synaptic homeostasis, and Rab3-GAP functions to inactivate this action of Rab3-GTP. The Rab3GAP complex, acts as a GEF for Rab18 by promoting the conversion of inactive Rab18-GDP to the active form Rab18-GTP. Regulates autophagy as part of a Rab3GAP-Rab18 module. Once Rab18 is activated by the GEF Rab3GAP complex, the Rab3GAP-Rab18 module localizes to autophagosomes, and regulates autolysosome formation and maturation together with the Rab18 interacting effector, the PI3K/Vps34 Complex I. In Drosophila melanogaster (Fruit fly), this protein is Rab3 GTPase-activating protein catalytic subunit.